The following is a 320-amino-acid chain: Aspartate carbamoyltransferase catalytic subunit (320 aa).

Carbamoyl phosphate-binding residues include R68 and T69. K96 is a binding site for L-aspartate. 3 residues coordinate carbamoyl phosphate: R118, H148, and Q151. Residues R181 and R236 each contribute to the L-aspartate site. Positions 277 and 278 each coordinate carbamoyl phosphate.

Belongs to the aspartate/ornithine carbamoyltransferase superfamily. ATCase family. In terms of assembly, heterododecamer (2C3:3R2) of six catalytic PyrB chains organized as two trimers (C3), and six regulatory PyrI chains organized as three dimers (R2).

The catalysed reaction is carbamoyl phosphate + L-aspartate = N-carbamoyl-L-aspartate + phosphate + H(+). Its pathway is pyrimidine metabolism; UMP biosynthesis via de novo pathway; (S)-dihydroorotate from bicarbonate: step 2/3. Catalyzes the condensation of carbamoyl phosphate and aspartate to form carbamoyl aspartate and inorganic phosphate, the committed step in the de novo pyrimidine nucleotide biosynthesis pathway. This is Aspartate carbamoyltransferase catalytic subunit from Paracidovorax citrulli (strain AAC00-1) (Acidovorax citrulli).